The chain runs to 193 residues: Thioredoxin reductase-like selenoprotein T1b (193 aa).

Positions 1–21 (METRCLYLLLVCVLSVNHATA) are cleaved as a signal peptide. A cross-link (cysteinyl-selenocysteine (Cys-Sec)) is located at residues 44–47 (CVSU). Position 47 (U47) is a non-standard amino acid, selenocysteine.

Belongs to the SelWTH family. Selenoprotein T subfamily. In terms of processing, may contain a selenide-sulfide bond between Cys-44 and Sec-47. This bond is speculated to serve as redox-active pair. As to expression, widely expressed in the embryo. High level in embryonic blood at 24 hours post-fertilization (hpf).

Its subcellular location is the endoplasmic reticulum membrane. It catalyses the reaction [thioredoxin]-dithiol + NADP(+) = [thioredoxin]-disulfide + NADPH + H(+). Selenoprotein with thioredoxin reductase-like oxidoreductase activity. The chain is Thioredoxin reductase-like selenoprotein T1b from Danio rerio (Zebrafish).